The chain runs to 150 residues: Putative HTH-type transcriptional regulator HI_0379 (150 aa).

An HTH rrf2-type domain is found at 2-131 (KLTSKGRYAV…NEITLAELVN (130 aa)).

This chain is Putative HTH-type transcriptional regulator HI_0379, found in Haemophilus influenzae (strain ATCC 51907 / DSM 11121 / KW20 / Rd).